We begin with the raw amino-acid sequence, 291 residues long: Tyrosine-protein kinase PtkA (291 aa).

Residues 1-79 (MSSPRERRPA…RRASSPGESP (79 aa)) form a disordered region. Residues 23-60 (HQTSRSSPDTTAPTGSGLSNRFVNDNGIVTDTTASGTN) show a composition bias toward polar residues. Residue Y262 is modified to Phosphotyrosine.

It belongs to the HAD-like hydrolase superfamily. CbbY/CbbZ/Gph/YieH family. As to quaternary structure, interacts with PtpA. In terms of processing, autophosphorylated.

The enzyme catalyses L-tyrosyl-[protein] + ATP = O-phospho-L-tyrosyl-[protein] + ADP + H(+). Required for growth within macrophages. Catalyzes the phosphorylation of PtpA on the tyrosine residues at positions 128 and 129, thereby increasing PtpA phosphatase activity and promoting pathogenicity. The protein is Tyrosine-protein kinase PtkA of Mycobacterium bovis (strain ATCC BAA-935 / AF2122/97).